The sequence spans 887 residues: Bifunctional uridylyltransferase/uridylyl-removing enzyme (887 aa).

Residues 1–337 are uridylyltransferase; it reads MINTSPLLNY…RLPNYERKIE (337 aa). The interval 339–699 is uridylyl-removing; it reads VNDHFKIVDN…AHRKAAQDAV (361 aa). An HD domain is found at 457–579; the sequence is VDAHTLLLLR…LGDMEHLDYL (123 aa). 2 consecutive ACT domains span residues 700-782 and 809-887; these read QIFI…LMQR and MVEI…ICQH.

This sequence belongs to the GlnD family. Mg(2+) is required as a cofactor.

It catalyses the reaction [protein-PII]-L-tyrosine + UTP = [protein-PII]-uridylyl-L-tyrosine + diphosphate. It carries out the reaction [protein-PII]-uridylyl-L-tyrosine + H2O = [protein-PII]-L-tyrosine + UMP + H(+). Its activity is regulated as follows. Uridylyltransferase (UTase) activity is inhibited by glutamine, while glutamine activates uridylyl-removing (UR) activity. Its function is as follows. Modifies, by uridylylation and deuridylylation, the PII regulatory proteins (GlnB and homologs), in response to the nitrogen status of the cell that GlnD senses through the glutamine level. Under low glutamine levels, catalyzes the conversion of the PII proteins and UTP to PII-UMP and PPi, while under higher glutamine levels, GlnD hydrolyzes PII-UMP to PII and UMP (deuridylylation). Thus, controls uridylylation state and activity of the PII proteins, and plays an important role in the regulation of nitrogen assimilation and metabolism. In Acinetobacter baumannii (strain ACICU), this protein is Bifunctional uridylyltransferase/uridylyl-removing enzyme.